The following is a 384-amino-acid chain: Chorismate synthase (384 aa).

The NADP(+) site is built by Arg-40 and Arg-46. FMN-binding positions include Arg-127–Ser-129, Gln-247–Ala-248, Ala-292, Lys-307–Thr-311, and Arg-333.

Belongs to the chorismate synthase family. Homotetramer. FMNH2 is required as a cofactor.

The enzyme catalyses 5-O-(1-carboxyvinyl)-3-phosphoshikimate = chorismate + phosphate. The protein operates within metabolic intermediate biosynthesis; chorismate biosynthesis; chorismate from D-erythrose 4-phosphate and phosphoenolpyruvate: step 7/7. Its function is as follows. Catalyzes the anti-1,4-elimination of the C-3 phosphate and the C-6 proR hydrogen from 5-enolpyruvylshikimate-3-phosphate (EPSP) to yield chorismate, which is the branch point compound that serves as the starting substrate for the three terminal pathways of aromatic amino acid biosynthesis. This reaction introduces a second double bond into the aromatic ring system. This Alkaliphilus oremlandii (strain OhILAs) (Clostridium oremlandii (strain OhILAs)) protein is Chorismate synthase.